Reading from the N-terminus, the 206-residue chain is Ribonuclease HII (206 aa).

Residues 22-206 (RFICGVDEAG…ISFLKNILSL (185 aa)) form the RNase H type-2 domain. Positions 28, 29, and 120 each coordinate a divalent metal cation.

The protein belongs to the RNase HII family. Mn(2+) serves as cofactor. Mg(2+) is required as a cofactor.

The protein resides in the cytoplasm. It catalyses the reaction Endonucleolytic cleavage to 5'-phosphomonoester.. Endonuclease that specifically degrades the RNA of RNA-DNA hybrids. This Caldicellulosiruptor bescii (strain ATCC BAA-1888 / DSM 6725 / KCTC 15123 / Z-1320) (Anaerocellum thermophilum) protein is Ribonuclease HII.